We begin with the raw amino-acid sequence, 466 residues long: Citrate synthase, mitochondrial (466 aa).

A mitochondrion-targeting transit peptide spans 1-27; that stretch reads MALLTAAARLFGAKNASCLVLAARHAS. Residues 2–21 carry the SIFI-degron motif; it reads ALLTAAARLFGAKNASCLVL. At K57 the chain carries N6-succinyllysine. Position 76 is an N6-acetyllysine; alternate (K76). K76 carries the N6-succinyllysine; alternate modification. An N6-succinyllysine mark is found at K103 and K193. S226 carries the phosphoserine modification. H301 is a catalytic residue. Residues K321 and K327 each carry the N6-acetyllysine; alternate modification. N6-succinyllysine; alternate is present on residues K321 and K327. H347 is an active-site residue. Residue R356 participates in oxaloacetate binding. K375 bears the N6-acetyllysine; alternate mark. Residue K375 is modified to N6-succinyllysine; alternate. N6-acetyllysine is present on K382. K393 is modified (N6-acetyllysine; alternate). K393 carries the post-translational modification N6-succinyllysine; alternate. K395 carries the N6,N6,N6-trimethyllysine modification. D402 is an active-site residue. Oxaloacetate contacts are provided by R428 and R448. K450 is subject to N6-succinyllysine. An N6-acetyllysine; alternate modification is found at K459. N6-succinyllysine; alternate is present on K459.

This sequence belongs to the citrate synthase family. Homodimer. Methylated. Trimethylation at Lys-395 by CSKMT decreases citrate synthase activity. Post-translationally, in response to mitochondrial stress, the precursor protein is ubiquitinated by the SIFI complex in the cytoplasm before mitochondrial import, leading to its degradation. Within the SIFI complex, UBR4 initiates ubiquitin chain that are further elongated or branched by KCMF1.

It is found in the mitochondrion matrix. The catalysed reaction is oxaloacetate + acetyl-CoA + H2O = citrate + CoA + H(+). Its pathway is carbohydrate metabolism; tricarboxylic acid cycle; isocitrate from oxaloacetate: step 1/2. Functionally, key enzyme of the Krebs tricarboxylic acid cycle which catalyzes the synthesis of citrate from acetyl coenzyme A and oxaloacetate. The sequence is that of Citrate synthase, mitochondrial (CS) from Bos taurus (Bovine).